A 545-amino-acid polypeptide reads, in one-letter code: MAELSISPDEIRDALKDFVQSYEPGKASTTEVGYVLDAGDGIAHVQGLPGVMANELITFADGTLGLAQNLEESEIGVIVLGEFAGIEEGMEVRRTGEVLSVPVGDGYLGRVVDPLGNPIDGQGEIANEGRRALELQAPGVMQRKSVHEPMQTGIKAIDAMIPIGRGQRQLIIGDRQTGKTAIAIDTIINQKANWESGDTNKQVRCIYVAIGQKGSTIASVRGALEEAGAMEYTTIVASPASDPAGFKYLAPYTGSAIGQHWMYGGKHVLIIFDDLSKQAEAYRAVSLLLRRPPGREAYPGDVFYLHSRLLERCAKLSDELGAGSMTGLPIIETKANDVSAYIPTNVISITDGQIFLQSDLFNANQRPAVDVGISVSRVGGDAQVKSIKKVSGTLKLELAQYRSLEAFAIFASDLDAASRRQLARGARLTELLKQPQYSPFPIEEQVVSIWAGTKGKLDEVPVEDILRFERELLDHLHRNTEVLSQLKEKNVLTDDIIDAMDKAVDRFKLEFQTGEGKPLASVGSEKFEPAKAEDVNQEQIVKGKR.

Residue 173 to 180 participates in ATP binding; it reads GDRQTGKT.

It belongs to the ATPase alpha/beta chains family. In terms of assembly, F-type ATPases have 2 components, CF(1) - the catalytic core - and CF(0) - the membrane proton channel. CF(1) has five subunits: alpha(3), beta(3), gamma(1), delta(1), epsilon(1). CF(0) has three main subunits: a(1), b(2) and c(9-12). The alpha and beta chains form an alternating ring which encloses part of the gamma chain. CF(1) is attached to CF(0) by a central stalk formed by the gamma and epsilon chains, while a peripheral stalk is formed by the delta and b chains.

The protein localises to the cell membrane. The enzyme catalyses ATP + H2O + 4 H(+)(in) = ADP + phosphate + 5 H(+)(out). Functionally, produces ATP from ADP in the presence of a proton gradient across the membrane. The alpha chain is a regulatory subunit. The protein is ATP synthase subunit alpha of Clavibacter sepedonicus (Clavibacter michiganensis subsp. sepedonicus).